The chain runs to 137 residues: Gonadotropin subunit beta-1 (137 aa).

An N-terminal signal peptide occupies residues 1-24; that stretch reads MYCTHLKTLQLVVMATLWVTPVRA. Cystine bridges form between Cys-32–Cys-78, Cys-46–Cys-93, Cys-55–Cys-108, Cys-59–Cys-110, and Cys-113–Cys-120. N-linked (GlcNAc...) asparagine glycosylation occurs at Asn-36.

Belongs to the glycoprotein hormones subunit beta family. As to quaternary structure, heterodimer of an alpha and a beta chain.

It localises to the secreted. Functionally, involved in gametogenesis and steroidogenesis. The polypeptide is Gonadotropin subunit beta-1 (cgba) (Oncorhynchus masou (Cherry salmon)).